A 443-amino-acid chain; its full sequence is Sulfoquinovose isomerase (443 aa).

Belongs to the SqvD family.

The catalysed reaction is 6-sulfo-beta-D-quinovose = 6-deoxy-6-sulfo-D-fructose. Its function is as follows. Part of the sulfo-EMP2 pathway, a D-sulfoquinovose degradation pathway that produces sulfolactate (SL). Catalyzes the isomerization of sulfoquinovose (SQ) to 6-deoxy-6-sulfo-D-fructose (SF). The sequence is that of Sulfoquinovose isomerase from Alkalicoccus urumqiensis (Bacillus urumqiensis).